The sequence spans 85 residues: Serine protease inhibitor Kazal-type 7 (85 aa).

Positions 1-19 (MKITGGLLLLCTVVYFCSS) are cleaved as a signal peptide. Positions 26–85 (SPKKVDCSIYKKYPVVAIPCPITYLPVCGSDYITYGNECHLCTESLKSNGRVQFLHDGSC) constitute a Kazal-like domain. 3 disulfides stabilise this stretch: Cys-32–Cys-67, Cys-45–Cys-64, and Cys-53–Cys-85.

It localises to the secreted. Functionally, probable serine protease inhibitor. The sequence is that of Serine protease inhibitor Kazal-type 7 (SPINK7) from Homo sapiens (Human).